The following is a 1811-amino-acid chain: ADP-ribosylation factor guanine nucleotide-exchange factor sec71 (1811 aa).

2 disordered regions span residues 1–108 (MTDL…TSEA) and 316–336 (INMNKSSSNGTPDRANSPIPS). Composition is skewed to basic and acidic residues over residues 33–49 (STIKSRVSDEIDEHDSI), 57–73 (KSIEINDKNLEAEKDIE), and 80–91 (PPEDDLDSRSIE). Phosphoserine is present on Ser-40. Polar residues-rich tracts occupy residues 92–108 (SEQTGTLSKQTTSTSEA) and 316–326 (INMNKSSSNGT). At Thr-326 the chain carries Phosphothreonine. A phosphoserine mark is found at Ser-332 and Ser-353. Residues 533–537 (NYDCI) carry the HUS box motif. Over residues 643 to 663 (TAKDDETESTSKGEEPQKSKS) the composition is skewed to basic and acidic residues. Residues 643–688 (TAKDDETESTSKGEEPQKSKSEPPSAGINSTSMDNLESSGQALATD) form a disordered region. Residues 669–688 (GINSTSMDNLESSGQALATD) show a composition bias toward polar residues. Residues 692–880 (QFENLKHRKK…TEVYEEIQKN (189 aa)) enclose the SEC7 domain. Position 741 is a phosphoserine (Ser-741). Phosphothreonine is present on Thr-742. Asp-812 lines the Mg(2+) pocket. The tract at residues 889 to 1103 (DPTSNFPEIP…TTKPLRKSLD (215 aa)) is HDS1 domain.

It is found in the cytoplasm. Its subcellular location is the golgi apparatus. The protein resides in the trans-Golgi network. The protein localises to the cytoplasmic vesicle. It localises to the COPI-coated vesicle membrane. It is found in the COPII-coated vesicle membrane. In terms of biological role, guanine exchange factor that acts as an activator of arf1 at the trans-Golgi net-work and is thus involved in vesicular budding and traffic between compartments of the Golgi apparatus. Activation of Arf (ADP-ribosylation factor) GTPases is essential for vesicle formation via recruitment of cargo adapters and coat proteins necessary for Golgi trafficking. Involved in tunicamycin-induced ER stress response and subsequent apoptosis. In Schizosaccharomyces pombe (strain 972 / ATCC 24843) (Fission yeast), this protein is ADP-ribosylation factor guanine nucleotide-exchange factor sec71.